The primary structure comprises 1084 residues: Probable sucrose-phosphate synthase 1 (1084 aa).

Positions 25-46 (GGGGGGGGGGGGGGGGGGGGGV) are enriched in gly residues. The disordered stretch occupies residues 25–61 (GGGGGGGGGGGGGGGGGGGGGVDPRSPAAGAASPRGP). Positions 48–61 (PRSPAAGAASPRGP) are enriched in low complexity.

Belongs to the glycosyltransferase 1 family. As to quaternary structure, homodimer or homotetramer. Expressed in leaves mesophyll cells, scutellum of germinating seedlings and pollen of immature inflorescences.

The catalysed reaction is beta-D-fructose 6-phosphate + UDP-alpha-D-glucose = sucrose 6(F)-phosphate + UDP + H(+). The protein operates within glycan biosynthesis; sucrose biosynthesis; sucrose from D-fructose 6-phosphate and UDP-alpha-D-glucose: step 1/2. Its activity is regulated as follows. Activity is regulated by phosphorylation and moderated by concentration of metabolites and light. Plays a role in photosynthetic sucrose synthesis by catalyzing the rate-limiting step of sucrose biosynthesis from UDP-glucose and fructose- 6-phosphate. Involved in the regulation of carbon partitioning in the leaves of plants. May regulate the synthesis of sucrose and therefore play a major role as a limiting factor in the export of photoassimilates out of the leaf. Plays a role for sucrose availability that is essential for plant growth and fiber elongation. The sequence is that of Probable sucrose-phosphate synthase 1 (SPS1) from Oryza sativa subsp. indica (Rice).